The sequence spans 710 residues: Adenylosuccinate synthetase (710 aa).

A disordered region spans residues 1 to 54; that stretch reads MPVRRYGGRYNSSSPGVSNALNPSRTAGWPLSPSPATGSKPASTHHDPVPQEAY. Polar residues predominate over residues 10 to 25; sequence YNSSSPGVSNALNPSR. The segment covering 44-54 has biased composition (basic and acidic residues); sequence THHDPVPQEAY. GTP contacts are provided by residues 180–186 and 210–212; these read GDEGKGK and GHT. The active-site Proton acceptor is the Asp-181. Asp-181 and Gly-210 together coordinate Mg(2+). IMP contacts are provided by residues 181-184, 208-211, Thr-295, Lys-309, Gln-421, Thr-437, and Lys-567; these read DEGK and NAGH. The active-site Proton donor is the His-211. 563-569 contacts substrate; sequence AVTKKPR. Residues Arg-569 and 697–699 contribute to the GTP site; that span reads GNG.

It belongs to the adenylosuccinate synthetase family. In terms of assembly, homodimer. Mg(2+) is required as a cofactor.

It localises to the cytoplasm. It catalyses the reaction IMP + L-aspartate + GTP = N(6)-(1,2-dicarboxyethyl)-AMP + GDP + phosphate + 2 H(+). It functions in the pathway purine metabolism; AMP biosynthesis via de novo pathway; AMP from IMP: step 1/2. Plays an important role in the salvage pathway for purine nucleotide biosynthesis. Catalyzes the first committed step in the biosynthesis of AMP from IMP. In Leishmania major, this protein is Adenylosuccinate synthetase.